Here is a 224-residue protein sequence, read N- to C-terminus: Transmembrane protein C16orf54 (224 aa).

Residue T4 is glycosylated (O-linked (GalNAc...) threonine). Residues 32–52 (IPIMLVLATLAALFILTTAVL) form a helical membrane-spanning segment. Disordered stretches follow at residues 104 to 138 (TDRA…SNLG) and 152 to 203 (WGPQ…GLQP). A phosphothreonine mark is found at T112 and T116. At S194 the chain carries Phosphoserine.

Post-translationally, O-glycosylated with core 1 or possibly core 8 glycans.

Its subcellular location is the membrane. This chain is Transmembrane protein C16orf54 (C16orf54), found in Homo sapiens (Human).